The primary structure comprises 661 residues: uncharacterized protein (661 aa).

The interval 25-52 (LLPSEPPVGDMNNEDSDTNTSITQSPTN) is disordered. The segment covering 42–52 (TNTSITQSPTN) has biased composition (polar residues). The SANT domain maps to 246–297 (SMPDIWNEEQHSIFVQQFILHGKKFGKIAEAVPGKNSKECVLHYYLTKRTTD). 4 disordered regions span residues 306–329 (TKTKGRRRKKLLPSQRGGKKKSKG), 478–499 (YYEPKLEQHSSSKRNSISTRKE), 548–570 (PMKMPLTPRRASTGPRPRPTFQL), and 604–633 (RIDELSVEDQEHTTHSSHTTSDINAFPNSQ). Over residues 308–328 (TKGRRRKKLLPSQRGGKKKSK) the composition is skewed to basic residues. Positions 478–487 (YYEPKLEQHS) are enriched in basic and acidic residues. A compositionally biased stretch (basic and acidic residues) spans 604 to 617 (RIDELSVEDQEHTT).

Its subcellular location is the nucleus. This is an uncharacterized protein from Schizosaccharomyces pombe (strain 972 / ATCC 24843) (Fission yeast).